Here is a 478-residue protein sequence, read N- to C-terminus: Uronate isomerase (478 aa).

The protein belongs to the metallo-dependent hydrolases superfamily. Uronate isomerase family.

It catalyses the reaction D-glucuronate = D-fructuronate. The catalysed reaction is aldehydo-D-galacturonate = keto-D-tagaturonate. It functions in the pathway carbohydrate metabolism; pentose and glucuronate interconversion. This Bacillus pumilus (strain SAFR-032) protein is Uronate isomerase.